The following is a 184-amino-acid chain: Two-component response regulator ARR5 (184 aa).

The 129-residue stretch at 26-154 (HVLAVDDSMV…DVKRLRDSLM (129 aa)) folds into the Response regulatory domain. A 4-aspartylphosphate modification is found at Asp87.

Belongs to the ARR family. Type-A subfamily. Two-component system major event consists of a His-to-Asp phosphorelay between a sensor histidine kinase (HK) and a response regulator (RR). In plants, the His-to-Asp phosphorelay involves an additional intermediate named Histidine-containing phosphotransfer protein (HPt). This multistep phosphorelay consists of a His-Asp-His-Asp sequential transfer of a phosphate group between first a His and an Asp of the HK protein, followed by the transfer to a conserved His of the HPt protein and finally the transfer to an Asp in the receiver domain of the RR protein. Predominantly expressed in roots and shoot apical meristems.

It localises to the nucleus. Its function is as follows. Functions as a response regulator involved in His-to-Asp phosphorelay signal transduction system. Phosphorylation of the Asp residue in the receiver domain activates the ability of the protein to promote the transcription of target genes. Type-A response regulators seem to act as negative regulators of the cytokinin signaling. The polypeptide is Two-component response regulator ARR5 (ARR5) (Arabidopsis thaliana (Mouse-ear cress)).